A 605-amino-acid chain; its full sequence is Adenine deaminase (605 aa).

This sequence belongs to the metallo-dependent hydrolases superfamily. Adenine deaminase family. Mn(2+) is required as a cofactor.

It catalyses the reaction adenine + H2O + H(+) = hypoxanthine + NH4(+). In Mesorhizobium japonicum (strain LMG 29417 / CECT 9101 / MAFF 303099) (Mesorhizobium loti (strain MAFF 303099)), this protein is Adenine deaminase.